We begin with the raw amino-acid sequence, 277 residues long: Undecaprenyl-diphosphatase 2 (277 aa).

Helical transmembrane passes span Arg43–Phe63, Leu87–Glu107, Leu109–Ala129, Ala183–Ser203, Ser214–Val234, and Ile254–Ala274.

Belongs to the UppP family.

The protein localises to the cell inner membrane. The enzyme catalyses di-trans,octa-cis-undecaprenyl diphosphate + H2O = di-trans,octa-cis-undecaprenyl phosphate + phosphate + H(+). Functionally, catalyzes the dephosphorylation of undecaprenyl diphosphate (UPP). Confers resistance to bacitracin. This chain is Undecaprenyl-diphosphatase 2, found in Pseudomonas fluorescens (strain Pf0-1).